Here is a 397-residue protein sequence, read N- to C-terminus: Small ribosomal subunit protein mS29 (397 aa).

The N-terminal 17 residues, 1 to 17 (MLKGMTRLVSRVHKLDP), are a transit peptide targeting the mitochondrion. N6-acetyllysine is present on residues lysine 174 and lysine 206.

This sequence belongs to the mitochondrion-specific ribosomal protein mS29 family. As to quaternary structure, component of the mitochondrial ribosome small subunit (28S) which comprises a 12S rRNA and about 30 distinct proteins. Interacts with DELE1. Interacts with NOA1.

The protein resides in the mitochondrion. The catalysed reaction is GTP + H2O = GDP + phosphate + H(+). Its function is as follows. As a component of the mitochondrial small ribosomal subunit, it plays a role in the translation of mitochondrial mRNAs. Involved in mediating interferon-gamma-induced cell death. Displays GTPase activity in vitro. In Bos taurus (Bovine), this protein is Small ribosomal subunit protein mS29.